The chain runs to 336 residues: Holliday junction branch migration complex subunit RuvB (336 aa).

The interval 4 to 185 (MDERLLSGES…FGVLSRLEYY (182 aa)) is large ATPase domain (RuvB-L). ATP-binding positions include L24, R25, G66, K69, T70, T71, 132 to 134 (EDF), R175, Y185, and R222. Residue T70 participates in Mg(2+) binding. The segment at 186-256 (TVDQLSAIVE…ITQMALELLQ (71 aa)) is small ATPAse domain (RuvB-S). Positions 259–336 (KLGLDHIDHK…EHFGMEMPKV (78 aa)) are head domain (RuvB-H). Residues R314 and R319 each coordinate DNA.

It belongs to the RuvB family. As to quaternary structure, homohexamer. Forms an RuvA(8)-RuvB(12)-Holliday junction (HJ) complex. HJ DNA is sandwiched between 2 RuvA tetramers; dsDNA enters through RuvA and exits via RuvB. An RuvB hexamer assembles on each DNA strand where it exits the tetramer. Each RuvB hexamer is contacted by two RuvA subunits (via domain III) on 2 adjacent RuvB subunits; this complex drives branch migration. In the full resolvosome a probable DNA-RuvA(4)-RuvB(12)-RuvC(2) complex forms which resolves the HJ.

The protein resides in the cytoplasm. It catalyses the reaction ATP + H2O = ADP + phosphate + H(+). The RuvA-RuvB-RuvC complex processes Holliday junction (HJ) DNA during genetic recombination and DNA repair, while the RuvA-RuvB complex plays an important role in the rescue of blocked DNA replication forks via replication fork reversal (RFR). RuvA specifically binds to HJ cruciform DNA, conferring on it an open structure. The RuvB hexamer acts as an ATP-dependent pump, pulling dsDNA into and through the RuvAB complex. RuvB forms 2 homohexamers on either side of HJ DNA bound by 1 or 2 RuvA tetramers; 4 subunits per hexamer contact DNA at a time. Coordinated motions by a converter formed by DNA-disengaged RuvB subunits stimulates ATP hydrolysis and nucleotide exchange. Immobilization of the converter enables RuvB to convert the ATP-contained energy into a lever motion, pulling 2 nucleotides of DNA out of the RuvA tetramer per ATP hydrolyzed, thus driving DNA branch migration. The RuvB motors rotate together with the DNA substrate, which together with the progressing nucleotide cycle form the mechanistic basis for DNA recombination by continuous HJ branch migration. Branch migration allows RuvC to scan DNA until it finds its consensus sequence, where it cleaves and resolves cruciform DNA. This chain is Holliday junction branch migration complex subunit RuvB, found in Bacillus thuringiensis (strain Al Hakam).